Consider the following 200-residue polypeptide: Probable nicotinate-nucleotide adenylyltransferase (200 aa).

The protein belongs to the NadD family.

The enzyme catalyses nicotinate beta-D-ribonucleotide + ATP + H(+) = deamido-NAD(+) + diphosphate. It functions in the pathway cofactor biosynthesis; NAD(+) biosynthesis; deamido-NAD(+) from nicotinate D-ribonucleotide: step 1/1. In terms of biological role, catalyzes the reversible adenylation of nicotinate mononucleotide (NaMN) to nicotinic acid adenine dinucleotide (NaAD). The chain is Probable nicotinate-nucleotide adenylyltransferase from Clavibacter sepedonicus (Clavibacter michiganensis subsp. sepedonicus).